A 265-amino-acid polypeptide reads, in one-letter code: MLQNIAIGQYVPGQSFLHRADPRSKLLFIILFATLIFLANNTVTYAILIGFTLYAALLSRLSLSYILKSLKPVWILILFTVVLHIFITKGGTVYFQWGWFTVEEQGVRQAIFISLRLGLLILISSLLTLTTSPIDLTEGLERLLGPLGKIGIPVHDIALMMSIALRFIPTLMEETDKIIKAQTARGANFTSGSLVRRAKNLIPIAIPLFVSAFRRAEELALAMEARGYRGGVGRTRLNKLTFTWRDGIVAVVSVILVIVIGWWRT.

Transmembrane regions (helical) follow at residues 29–49, 73–93, 110–130, 143–163, and 242–262; these read IILFATLIFLANNTVTYAILI, VWILILFTVVLHIFITKGGTV, AIFISLRLGLLILISSLLTLT, LLGPLGKIGIPVHDIALMMSI, and FTWRDGIVAVVSVILVIVIGW.

Belongs to the energy-coupling factor EcfT family. Forms a stable energy-coupling factor (ECF) transporter complex composed of 2 membrane-embedded substrate-binding proteins (S component), 2 ATP-binding proteins (A component) and 2 transmembrane proteins (T component). May be able to interact with more than 1 S component at a time.

Its subcellular location is the cell membrane. Its function is as follows. Transmembrane (T) component of an energy-coupling factor (ECF) ABC-transporter complex. Unlike classic ABC transporters this ECF transporter provides the energy necessary to transport a number of different substrates. The sequence is that of Energy-coupling factor transporter transmembrane protein EcfT from Brevibacillus brevis (strain 47 / JCM 6285 / NBRC 100599).